Reading from the N-terminus, the 164-residue chain is C-type natriuretic peptide (164 aa).

The N-terminal stretch at 1-23 (MVASRLAAGGLLLLALLALALDG) is a signal peptide. Disordered stretches follow at residues 24–93 (KPAP…AAAA) and 115–134 (HPEHHAGGGGGGGGGGGASR). The propeptide occupies 24 to 142 (KPAPPQPLRK…SRRLKGVAKK (119 aa)). Over residues 58-67 (AGGGGGGGRS) the composition is skewed to gly residues. Low complexity predominate over residues 68–93 (GSKAANAAPTAPKSKGGAAAAAAAAA). Gly residues predominate over residues 121–132 (GGGGGGGGGGGA). A disulfide bridge connects residues Cys148 and Cys164.

The protein belongs to the natriuretic peptide family. Expressed by the venom gland.

Its subcellular location is the secreted. In terms of biological role, snake venom natriuretic peptide that has a vasorelaxant activity in rat aortic strips and a diuretic potency in anesthetized rats. May act by activating natriuretic receptors (NPR1 and/or NPR2). The polypeptide is C-type natriuretic peptide (Philodryas olfersii (Green snake)).